Here is a 453-residue protein sequence, read N- to C-terminus: UDP-glycosyltransferase 76E9 (453 aa).

UDP-alpha-D-glucose contacts are provided by residues Ser-279, 337-339, 354-362, and 376-379; these read APQ, HCGWNSTLE, and TTDQ.

It belongs to the UDP-glycosyltransferase family.

The chain is UDP-glycosyltransferase 76E9 (UGT76E9) from Arabidopsis thaliana (Mouse-ear cress).